We begin with the raw amino-acid sequence, 531 residues long: T-complex protein 1 subunit zeta-2 (531 aa).

This sequence belongs to the TCP-1 chaperonin family. In terms of assembly, component of the chaperonin-containing T-complex (TRiC), a heterooligomeric complex of about 850 to 900 kDa that forms two stacked rings, 12 to 16 nm in diameter. As to expression, testis specific.

Its subcellular location is the cytoplasm. Its function is as follows. Component of the chaperonin-containing T-complex (TRiC), a molecular chaperone complex that assists the folding of proteins upon ATP hydrolysis. This Mus musculus (Mouse) protein is T-complex protein 1 subunit zeta-2 (Cct6b).